A 213-amino-acid polypeptide reads, in one-letter code: Leucyl/phenylalanyl-tRNA--protein transferase (213 aa).

The protein belongs to the L/F-transferase family.

Its subcellular location is the cytoplasm. The catalysed reaction is N-terminal L-lysyl-[protein] + L-leucyl-tRNA(Leu) = N-terminal L-leucyl-L-lysyl-[protein] + tRNA(Leu) + H(+). The enzyme catalyses N-terminal L-arginyl-[protein] + L-leucyl-tRNA(Leu) = N-terminal L-leucyl-L-arginyl-[protein] + tRNA(Leu) + H(+). It catalyses the reaction L-phenylalanyl-tRNA(Phe) + an N-terminal L-alpha-aminoacyl-[protein] = an N-terminal L-phenylalanyl-L-alpha-aminoacyl-[protein] + tRNA(Phe). Its function is as follows. Functions in the N-end rule pathway of protein degradation where it conjugates Leu, Phe and, less efficiently, Met from aminoacyl-tRNAs to the N-termini of proteins containing an N-terminal arginine or lysine. The chain is Leucyl/phenylalanyl-tRNA--protein transferase from Campylobacter lari (strain RM2100 / D67 / ATCC BAA-1060).